A 308-amino-acid polypeptide reads, in one-letter code: Transaldolase (308 aa).

The Schiff-base intermediate with substrate role is filled by K125.

This sequence belongs to the transaldolase family. Type 1 subfamily. Homodimer.

Its subcellular location is the cytoplasm. It carries out the reaction D-sedoheptulose 7-phosphate + D-glyceraldehyde 3-phosphate = D-erythrose 4-phosphate + beta-D-fructose 6-phosphate. Its pathway is carbohydrate degradation; pentose phosphate pathway; D-glyceraldehyde 3-phosphate and beta-D-fructose 6-phosphate from D-ribose 5-phosphate and D-xylulose 5-phosphate (non-oxidative stage): step 2/3. Transaldolase is important for the balance of metabolites in the pentose-phosphate pathway. The sequence is that of Transaldolase from Pseudomonas savastanoi pv. phaseolicola (strain 1448A / Race 6) (Pseudomonas syringae pv. phaseolicola (strain 1448A / Race 6)).